The sequence spans 353 residues: Photosystem II D2 protein (353 aa).

A helical transmembrane segment spans residues Thr41 to Thr61. Residue His118 participates in chlorophyll a binding. The helical transmembrane segment at Gly125–Pro141 threads the bilayer. Gln130 and Asn143 together coordinate pheophytin a. The helical transmembrane segment at Val153 to Ser166 threads the bilayer. His198 is a chlorophyll a binding site. Residues Gly208–Glu228 traverse the membrane as a helical segment. A plastoquinone-binding residues include His215 and Phe262. Position 215 (His215) interacts with Fe cation. Position 269 (His269) interacts with Fe cation. A helical transmembrane segment spans residues Gly279–Arg295.

This sequence belongs to the reaction center PufL/M/PsbA/D family. As to quaternary structure, PSII is composed of 1 copy each of membrane proteins PsbA, PsbB, PsbC, PsbD, PsbE, PsbF, PsbH, PsbI, PsbJ, PsbK, PsbL, PsbM, PsbT, PsbX, PsbY, PsbZ, Psb30/Ycf12, peripheral proteins PsbO, CyanoQ (PsbQ), PsbU, PsbV and a large number of cofactors. It forms dimeric complexes. The cofactor is The D1/D2 heterodimer binds P680, chlorophylls that are the primary electron donor of PSII, and subsequent electron acceptors. It shares a non-heme iron and each subunit binds pheophytin, quinone, additional chlorophylls, carotenoids and lipids. There is also a Cl(-1) ion associated with D1 and D2, which is required for oxygen evolution. The PSII complex binds additional chlorophylls, carotenoids and specific lipids..

Its subcellular location is the host cellular thylakoid membrane. The catalysed reaction is 2 a plastoquinone + 4 hnu + 2 H2O = 2 a plastoquinol + O2. Its function is as follows. Photosystem II (PSII) is a light-driven water:plastoquinone oxidoreductase that uses light energy to abstract electrons from H(2)O, generating O(2) and a proton gradient subsequently used for ATP formation. It consists of a core antenna complex that captures photons, and an electron transfer chain that converts photonic excitation into a charge separation. The D1/D2 (PsbA/PsbD) reaction center heterodimer binds P680, the primary electron donor of PSII as well as several subsequent electron acceptors. D2 is needed for assembly of a stable PSII complex. The sequence is that of Photosystem II D2 protein (psbD) from Synechococcus phage S-PM2.